Here is a 308-residue protein sequence, read N- to C-terminus: D-alanine--D-alanine ligase (308 aa).

In terms of domain architecture, ATP-grasp spans 102 to 302 (KKVAAAAGVA…FGELLSWMVE (201 aa)). Position 128-183 (128-183 (PMEPPYVVKPVREGSSFGVVIVKEDQTHPPQIISSAEWNYGAEVLVEKYIPGRELT)) interacts with ATP. Mg(2+) is bound by residues aspartate 252, glutamate 269, and asparagine 271.

The protein belongs to the D-alanine--D-alanine ligase family. The cofactor is Mg(2+). It depends on Mn(2+) as a cofactor.

The protein resides in the cytoplasm. The catalysed reaction is 2 D-alanine + ATP = D-alanyl-D-alanine + ADP + phosphate + H(+). Its pathway is cell wall biogenesis; peptidoglycan biosynthesis. In terms of biological role, cell wall formation. The sequence is that of D-alanine--D-alanine ligase from Brucella anthropi (strain ATCC 49188 / DSM 6882 / CCUG 24695 / JCM 21032 / LMG 3331 / NBRC 15819 / NCTC 12168 / Alc 37) (Ochrobactrum anthropi).